The sequence spans 391 residues: Aminoacetone oxidase (391 aa).

Alanine 14, glutamate 33, isoleucine 134, glutamate 362, asparagine 374, and isoleucine 375 together coordinate FAD.

It belongs to the BaiN/RdsA family. In terms of assembly, monomer. It depends on FAD as a cofactor.

Its function is as follows. Flavoprotein that probably catalyzes the condensation of two molecules of aminoacetone to yield 3,6-dimethyl-2,5-dihydropyrazine, which is subsequently oxidized to 2,5-dimethylpyrazine. It could be involved in a microbial defense mechanism related to aminoacetone catabolism through a pathway yielding dimethylpyrazine derivatives instead of methylglyoxal. It has also low aminoacetone oxidase activity, and can produce hydrogen peroxide from aminoacetone. In addition, it shows very low L-amino acid oxidase activity, and can produce hydrogen peroxide from peptone and from seven amino acids, L-aspartate, L-tryptophan, L-lysine, L-isoleucine, L-arginine, L-asparagine and L-glutamine. It cannot use L-malate, oxaloacetate or alpha-aminobutyrate. Plays a role in antioxidant defense. The protein is Aminoacetone oxidase of Streptococcus cristatus.